A 940-amino-acid chain; its full sequence is Isoleucine--tRNA ligase (940 aa).

A 'HIGH' region motif is present at residues 58–68 (PYANGSIHIGH). Glu563 lines the L-isoleucyl-5'-AMP pocket. Residues 604 to 608 (KMSKS) carry the 'KMSKS' region motif. Lys607 is a binding site for ATP. Positions 902, 905, 922, and 925 each coordinate Zn(2+).

It belongs to the class-I aminoacyl-tRNA synthetase family. IleS type 1 subfamily. As to quaternary structure, monomer. Requires Zn(2+) as cofactor.

The protein localises to the cytoplasm. It carries out the reaction tRNA(Ile) + L-isoleucine + ATP = L-isoleucyl-tRNA(Ile) + AMP + diphosphate. Its function is as follows. Catalyzes the attachment of isoleucine to tRNA(Ile). As IleRS can inadvertently accommodate and process structurally similar amino acids such as valine, to avoid such errors it has two additional distinct tRNA(Ile)-dependent editing activities. One activity is designated as 'pretransfer' editing and involves the hydrolysis of activated Val-AMP. The other activity is designated 'posttransfer' editing and involves deacylation of mischarged Val-tRNA(Ile). This chain is Isoleucine--tRNA ligase, found in Marinomonas sp. (strain MWYL1).